The primary structure comprises 269 residues: Glutamate 5-kinase (269 aa).

Lys14 serves as a coordination point for ATP. Positions 54, 141, and 157 each coordinate substrate. ATP-binding positions include 177 to 178 (SD) and 219 to 225 (TGGMVTK).

The protein belongs to the glutamate 5-kinase family.

The protein resides in the cytoplasm. The enzyme catalyses L-glutamate + ATP = L-glutamyl 5-phosphate + ADP. The protein operates within amino-acid biosynthesis; L-proline biosynthesis; L-glutamate 5-semialdehyde from L-glutamate: step 1/2. Its function is as follows. Catalyzes the transfer of a phosphate group to glutamate to form L-glutamate 5-phosphate. The chain is Glutamate 5-kinase from Clostridium perfringens (strain 13 / Type A).